A 310-amino-acid chain; its full sequence is Small ribosomal subunit biogenesis GTPase RsgA (310 aa).

Positions Lys77–Leu236 constitute a CP-type G domain. GTP contacts are provided by residues Ser126–Asp129 and Gly179–Thr187. Residues Cys260, Cys266, His268, and Cys274 each contribute to the Zn(2+) site.

This sequence belongs to the TRAFAC class YlqF/YawG GTPase family. RsgA subfamily. In terms of assembly, monomer. Associates with 30S ribosomal subunit, binds 16S rRNA. Requires Zn(2+) as cofactor.

It is found in the cytoplasm. Functionally, one of several proteins that assist in the late maturation steps of the functional core of the 30S ribosomal subunit. Helps release RbfA from mature subunits. May play a role in the assembly of ribosomal proteins into the subunit. Circularly permuted GTPase that catalyzes slow GTP hydrolysis, GTPase activity is stimulated by the 30S ribosomal subunit. The polypeptide is Small ribosomal subunit biogenesis GTPase RsgA (Phytoplasma australiense).